The primary structure comprises 127 residues: uncharacterized protein (127 aa).

The N-terminal stretch at 1 to 16 (MIKKIIFGIAILLSLS) is a signal peptide. Cysteine 17 carries N-palmitoyl cysteine lipidation. A lipid anchor (S-diacylglycerol cysteine) is attached at cysteine 17. Residues 56-101 (EVRKEIQEYRVEIVDINKKKRELYNSLSKEAQNFLAEQQKYKQKLS) are a coiled coil. The segment at 101 to 127 (SISKLPTEDDSPNNTANSKDNKDTDTK) is disordered.

The protein localises to the cell membrane. This is an uncharacterized protein from Rickettsia felis (strain ATCC VR-1525 / URRWXCal2) (Rickettsia azadi).